Here is a 613-residue protein sequence, read N- to C-terminus: Dihydroxy-acid dehydratase (613 aa).

Residue aspartate 81 coordinates Mg(2+). Cysteine 122 contributes to the [2Fe-2S] cluster binding site. Mg(2+)-binding residues include aspartate 123 and lysine 124. Lysine 124 is subject to N6-carboxylysine. Cysteine 195 serves as a coordination point for [2Fe-2S] cluster. Glutamate 491 provides a ligand contact to Mg(2+). Residue serine 517 is the Proton acceptor of the active site.

It belongs to the IlvD/Edd family. Homodimer. [2Fe-2S] cluster is required as a cofactor. Mg(2+) serves as cofactor.

It catalyses the reaction (2R)-2,3-dihydroxy-3-methylbutanoate = 3-methyl-2-oxobutanoate + H2O. The enzyme catalyses (2R,3R)-2,3-dihydroxy-3-methylpentanoate = (S)-3-methyl-2-oxopentanoate + H2O. It participates in amino-acid biosynthesis; L-isoleucine biosynthesis; L-isoleucine from 2-oxobutanoate: step 3/4. Its pathway is amino-acid biosynthesis; L-valine biosynthesis; L-valine from pyruvate: step 3/4. In terms of biological role, functions in the biosynthesis of branched-chain amino acids. Catalyzes the dehydration of (2R,3R)-2,3-dihydroxy-3-methylpentanoate (2,3-dihydroxy-3-methylvalerate) into 2-oxo-3-methylpentanoate (2-oxo-3-methylvalerate) and of (2R)-2,3-dihydroxy-3-methylbutanoate (2,3-dihydroxyisovalerate) into 2-oxo-3-methylbutanoate (2-oxoisovalerate), the penultimate precursor to L-isoleucine and L-valine, respectively. This Photobacterium profundum (strain SS9) protein is Dihydroxy-acid dehydratase.